A 209-amino-acid polypeptide reads, in one-letter code: Thiamine-phosphate synthase (209 aa).

4-amino-2-methyl-5-(diphosphooxymethyl)pyrimidine-binding positions include 38-42 and N70; that span reads QYRAK. Mg(2+) is bound by residues D71 and D90. S109 serves as a coordination point for 4-amino-2-methyl-5-(diphosphooxymethyl)pyrimidine. Position 135–137 (135–137) interacts with 2-[(2R,5Z)-2-carboxy-4-methylthiazol-5(2H)-ylidene]ethyl phosphate; that stretch reads TST. 4-amino-2-methyl-5-(diphosphooxymethyl)pyrimidine is bound at residue K138. 2-[(2R,5Z)-2-carboxy-4-methylthiazol-5(2H)-ylidene]ethyl phosphate-binding positions include G165 and 185–186; that span reads VS.

The protein belongs to the thiamine-phosphate synthase family. Mg(2+) is required as a cofactor.

The enzyme catalyses 2-[(2R,5Z)-2-carboxy-4-methylthiazol-5(2H)-ylidene]ethyl phosphate + 4-amino-2-methyl-5-(diphosphooxymethyl)pyrimidine + 2 H(+) = thiamine phosphate + CO2 + diphosphate. The catalysed reaction is 2-(2-carboxy-4-methylthiazol-5-yl)ethyl phosphate + 4-amino-2-methyl-5-(diphosphooxymethyl)pyrimidine + 2 H(+) = thiamine phosphate + CO2 + diphosphate. It carries out the reaction 4-methyl-5-(2-phosphooxyethyl)-thiazole + 4-amino-2-methyl-5-(diphosphooxymethyl)pyrimidine + H(+) = thiamine phosphate + diphosphate. It participates in cofactor biosynthesis; thiamine diphosphate biosynthesis; thiamine phosphate from 4-amino-2-methyl-5-diphosphomethylpyrimidine and 4-methyl-5-(2-phosphoethyl)-thiazole: step 1/1. In terms of biological role, condenses 4-methyl-5-(beta-hydroxyethyl)thiazole monophosphate (THZ-P) and 2-methyl-4-amino-5-hydroxymethyl pyrimidine pyrophosphate (HMP-PP) to form thiamine monophosphate (TMP). The chain is Thiamine-phosphate synthase from Persephonella marina (strain DSM 14350 / EX-H1).